The primary structure comprises 210 residues: Cytochrome c oxidase subunit 2 (210 aa).

At 1–20 (MAFILSFWMIFLLDSVIVLL) the chain is on the mitochondrial intermembrane side. Residues 21–42 (SFVCFVCVWICALLFSTVLLVS) traverse the membrane as a helical segment. Residues 43-60 (KLNNIYCTWDFTASKFID) lie on the Mitochondrial matrix side of the membrane. A helical transmembrane segment spans residues 61–86 (VYWFTIGGMFSLGLLLRLCLLLYFGH). The Mitochondrial intermembrane portion of the chain corresponds to 87–210 (LNFVSFDLCK…GFMPIVICFI (124 aa)). Positions 157, 192, 194, 196, 200, and 203 each coordinate Cu cation. E194 is a binding site for Mg(2+).

The protein belongs to the cytochrome c oxidase subunit 2 family. Component of the cytochrome c oxidase (complex IV, CIV), a multisubunit enzyme composed of a catalytic core of 3 subunits and several supernumerary subunits. The complex exists as a monomer or a dimer and forms supercomplexes (SCs) in the inner mitochondrial membrane with ubiquinol-cytochrome c oxidoreductase (cytochrome b-c1 complex, complex III, CIII). It depends on Cu cation as a cofactor.

It is found in the mitochondrion inner membrane. The catalysed reaction is 4 Fe(II)-[cytochrome c] + O2 + 8 H(+)(in) = 4 Fe(III)-[cytochrome c] + 2 H2O + 4 H(+)(out). Its function is as follows. Component of the cytochrome c oxidase, the last enzyme in the mitochondrial electron transport chain which drives oxidative phosphorylation. The respiratory chain contains 3 multisubunit complexes succinate dehydrogenase (complex II, CII), ubiquinol-cytochrome c oxidoreductase (cytochrome b-c1 complex, complex III, CIII) and cytochrome c oxidase (complex IV, CIV), that cooperate to transfer electrons derived from NADH and succinate to molecular oxygen, creating an electrochemical gradient over the inner membrane that drives transmembrane transport and the ATP synthase. Cytochrome c oxidase is the component of the respiratory chain that catalyzes the reduction of oxygen to water. Electrons originating from reduced cytochrome c in the intermembrane space (IMS) are transferred via the dinuclear copper A center (CU(A)) of subunit 2 and heme A of subunit 1 to the active site in subunit 1, a binuclear center (BNC) formed by heme A3 and copper B (CU(B)). The BNC reduces molecular oxygen to 2 water molecules using 4 electrons from cytochrome c in the IMS and 4 protons from the mitochondrial matrix. The sequence is that of Cytochrome c oxidase subunit 2 from Leishmania tarentolae (Sauroleishmania tarentolae).